The chain runs to 80 residues: Small, acid-soluble spore protein Tlp (80 aa).

It belongs to the Tlp family.

The protein localises to the spore core. The chain is Small, acid-soluble spore protein Tlp from Bacillus pumilus (strain SAFR-032).